The following is a 195-amino-acid chain: MSIPLILASASPARKKLLQMVGIDPIVRVSNFDESTINADDTLHLVQTLAQCKAQTIAPKFDTGLILGCDSVLEVAGEVYGKPKDKSEAIERWQKMRGQVGTLYTGHALIDRVNNQTLTRCGITKVHFANISDETIIAYVDTEEPLKCAGCFALEGKGGLFVERLEGCHSNVIGLSLPLFRQMLTDFGYQITDFW.

The active-site Proton acceptor is aspartate 70.

Belongs to the Maf family. The cofactor is a divalent metal cation.

It is found in the cytoplasm. It carries out the reaction a ribonucleoside 5'-triphosphate + H2O = a ribonucleoside 5'-phosphate + diphosphate + H(+). It catalyses the reaction a 2'-deoxyribonucleoside 5'-triphosphate + H2O = a 2'-deoxyribonucleoside 5'-phosphate + diphosphate + H(+). Its function is as follows. Nucleoside triphosphate pyrophosphatase. May have a dual role in cell division arrest and in preventing the incorporation of modified nucleotides into cellular nucleic acids. The polypeptide is Nucleoside triphosphate pyrophosphatase (Microcystis aeruginosa (strain NIES-843 / IAM M-2473)).